The sequence spans 464 residues: Galactose-proton symporter (464 aa).

At 1 to 15 (MPDAKKQGRSNKAMT) the chain is on the cytoplasmic side. The chain crosses the membrane as a helical span at residues 16–36 (FFVCFLAALAGLLFGLDIGVI). Topologically, residues 37-56 (AGALPFIADEFQITSHTQEW) are periplasmic. A helical membrane pass occupies residues 57-77 (VVSSMMFGAAVGAVGSGWLSF). Residues 78-84 (KLGRKKS) are Cytoplasmic-facing. Residues 85–105 (LMIGAILFVAGSLFSAAAPNV) traverse the membrane as a helical segment. Over 106-112 (EVLILSR) the chain is Periplasmic. The chain crosses the membrane as a helical span at residues 113–133 (VLLGLAVGVASYTAPLYLSEI). At 134 to 139 (APEKIR) the chain is on the cytoplasmic side. The helical transmembrane segment at 140–160 (GSMISMYQLMITIGILGAYLS) threads the bilayer. Residues 161 to 171 (DTAFSYTGAWR) lie on the Periplasmic side of the membrane. A helical membrane pass occupies residues 172–192 (WMLGVIIIPAILLLIGVFFLP). Topologically, residues 193–250 (DSPRWFAAKRRFVDAERVLLRLRDTSAEAKRELDEIRESLQVKQSGWALFKENSNFRR) are cytoplasmic. A helical transmembrane segment spans residues 251-271 (AVFLGVLLQVMQQFTGMNVIM). The Periplasmic portion of the chain corresponds to 272–290 (YYAPKIFELAGYTNTTEQM). Residues 291-311 (WGTVIVGLTNVLATFIAIGLV) traverse the membrane as a helical segment. The Cytoplasmic segment spans residues 312–321 (DRWGRKPTLT). A helical transmembrane segment spans residues 322 to 342 (LGFLVMAAGMGVLGTMMHIGI). Residues 343–351 (HSPSAQYFA) lie on the Periplasmic side of the membrane. A helical membrane pass occupies residues 352–372 (IAMLLMFIVGFAMSAGPLIWV). Over 373–394 (LCSEIQPLKGRDFGITCSTATN) the chain is Cytoplasmic. Residues 395-415 (WIANMIVGATFLTMLNTLGNA) traverse the membrane as a helical segment. A topological domain (periplasmic) is located at residue Asn416. A helical membrane pass occupies residues 417–437 (TFWVYAALNVLFILLTLWLVP). At 438–464 (ETKHVSLEHIERNLMKGRKLREIGAHD) the chain is on the cytoplasmic side.

It belongs to the major facilitator superfamily. Sugar transporter (TC 2.A.1.1) family.

It is found in the cell inner membrane. Functionally, uptake of galactose across the boundary membrane with the concomitant transport of protons into the cell (symport system). The polypeptide is Galactose-proton symporter (galP) (Escherichia coli O6:H1 (strain CFT073 / ATCC 700928 / UPEC)).